We begin with the raw amino-acid sequence, 396 residues long: Elongation factor Tu (396 aa).

Positions 10 to 205 constitute a tr-type G domain; the sequence is KPHVNVGTIG…AVDEYIPTPE (196 aa). The interval 19–26 is G1; that stretch reads GHVDHGKT. 19–26 serves as a coordination point for GTP; it reads GHVDHGKT. Thr-26 is a Mg(2+) binding site. The segment at 61–65 is G2; it reads GITIA. Positions 82–85 are G3; sequence DCPG. GTP is bound by residues 82–86 and 137–140; these read DCPGH and NKTD. The tract at residues 137–140 is G4; it reads NKTD. The G5 stretch occupies residues 175-177; the sequence is SAL.

Belongs to the TRAFAC class translation factor GTPase superfamily. Classic translation factor GTPase family. EF-Tu/EF-1A subfamily. As to quaternary structure, monomer.

The protein resides in the cytoplasm. The enzyme catalyses GTP + H2O = GDP + phosphate + H(+). GTP hydrolase that promotes the GTP-dependent binding of aminoacyl-tRNA to the A-site of ribosomes during protein biosynthesis. This chain is Elongation factor Tu, found in Salinibacter ruber (strain DSM 13855 / M31).